Here is a 1325-residue protein sequence, read N- to C-terminus: Protein PHYTOCHROME-DEPENDENT LATE-FLOWERING (1325 aa).

2 stretches are compositionally biased toward polar residues: residues 313-331 (IGST…SVSG) and 504-515 (NFPQTSWNVNPG). Disordered regions lie at residues 313–371 (IGST…MPGL), 462–558 (EPFE…EFSG), 593–616 (ANEA…NSLP), 852–875 (VAGQ…NSTQ), and 1160–1325 (QQQQ…GNNS). The span at 518-529 (IEKEPKKEEQFS) shows a compositional bias: basic and acidic residues. Residues 596 to 607 (AMQQRQHQAQMA) are compositionally biased toward low complexity. Residues 863–875 (HGNTGNTPNNSTQ) show a composition bias toward polar residues. The span at 1160-1224 (QQQQQQQLQQ…QQQATASPLQ (65 aa)) shows a compositional bias: low complexity. Residues 1225-1239 (SVLSPPQVGSPSAGI) show a composition bias toward polar residues. Residues 1240–1262 (TQQQLQQSSPQQMSQRTPMSPQQ) are compositionally biased toward low complexity. 2 stretches are compositionally biased toward polar residues: residues 1263–1286 (VNQR…TSNL) and 1293–1325 (PQLS…GNNS).

In terms of assembly, component of a red light-dependent nuclear complex made of PHL, PHYB and CO. Interacts directly with PHYB and CO; CO binding requires the presence of PHYB. As to expression, mostly expressed in cotyledons and leaves, both in mesophyll and vasculature cells. Also present in roots, hypocotyls and shoot apices.

Its subcellular location is the nucleus. The protein localises to the nuclear body. It localises to the cytoplasmic granule. The protein resides in the cytoplasm. Its function is as follows. Triggers photoperiod-monitored flowering by repressing PHYB-dependent flowering negative regulation, probably through physical interactions with PHYB and CO. The chain is Protein PHYTOCHROME-DEPENDENT LATE-FLOWERING from Arabidopsis thaliana (Mouse-ear cress).